The following is a 128-amino-acid chain: Phosphoribosyl-AMP cyclohydrolase (128 aa).

Asp-77 is a binding site for Mg(2+). Cys-78 serves as a coordination point for Zn(2+). Residues Asp-79 and Asp-81 each contribute to the Mg(2+) site. Cys-94 and Cys-101 together coordinate Zn(2+).

Belongs to the PRA-CH family. In terms of assembly, homodimer. It depends on Mg(2+) as a cofactor. The cofactor is Zn(2+).

The protein localises to the cytoplasm. It carries out the reaction 1-(5-phospho-beta-D-ribosyl)-5'-AMP + H2O = 1-(5-phospho-beta-D-ribosyl)-5-[(5-phospho-beta-D-ribosylamino)methylideneamino]imidazole-4-carboxamide. It participates in amino-acid biosynthesis; L-histidine biosynthesis; L-histidine from 5-phospho-alpha-D-ribose 1-diphosphate: step 3/9. Functionally, catalyzes the hydrolysis of the adenine ring of phosphoribosyl-AMP. This Granulibacter bethesdensis (strain ATCC BAA-1260 / CGDNIH1) protein is Phosphoribosyl-AMP cyclohydrolase.